The sequence spans 531 residues: T-complex protein 1 subunit zeta (531 aa).

N-acetylalanine is present on A2. K5 is subject to N6-acetyllysine. G39 provides a ligand contact to ADP. ATP is bound at residue G39. Position 90 (D90) interacts with Mg(2+). ADP is bound by residues G91, T92, T93, S94, T158, and K159. ATP-binding residues include G91, T92, and T93. K199 is subject to N6-acetyllysine. Position 205 is a phosphoserine (S205). A Glycyl lysine isopeptide (Lys-Gly) (interchain with G-Cter in SUMO2) cross-link involves residue K251. An N6-acetyllysine mark is found at K287, K365, K377, and K388. ADP is bound at residue A411. ATP contacts are provided by A411, G412, D496, and K501. D496 contributes to the ADP binding site.

This sequence belongs to the TCP-1 chaperonin family. Component of the chaperonin-containing T-complex (TRiC), a hexadecamer composed of two identical back-to-back stacked rings enclosing a protein folding chamber. Each ring is made up of eight different subunits: TCP1/CCT1, CCT2, CCT3, CCT4, CCT5, CCT6A/CCT6, CCT7, CCT8. Interacts with PACRG.

It localises to the cytoplasm. It carries out the reaction ATP + H2O = ADP + phosphate + H(+). In terms of biological role, component of the chaperonin-containing T-complex (TRiC), a molecular chaperone complex that assists the folding of actin, tubulin and other proteins upon ATP hydrolysis. The TRiC complex mediates the folding of WRAP53/TCAB1, thereby regulating telomere maintenance. This chain is T-complex protein 1 subunit zeta (CCT6), found in Oryctolagus cuniculus (Rabbit).